We begin with the raw amino-acid sequence, 452 residues long: Disintegrin and metalloproteinase domain-containing protein 11 (452 aa).

The Peptidase M12B domain maps to Arg-1–Pro-120. The Extracellular segment spans residues Arg-1–Asn-417. Disulfide bonds link Cys-31-Cys-115, Cys-74-Cys-99, and Cys-76-Cys-83. Residues Pro-126–Asp-214 form the Disintegrin domain. Residue Asn-149 is glycosylated (N-linked (GlcNAc...) asparagine). Cysteines 186 and 206 form a disulfide. Residues Asn-288 and Asn-356 are each glycosylated (N-linked (GlcNAc...) asparagine). Intrachain disulfides connect Cys-360-Cys-375, Cys-369-Cys-381, and Cys-383-Cys-392. One can recognise an EGF-like domain in the interval Cys-360–Thr-416. The helical transmembrane segment at Ile-418–Gly-438 threads the bilayer. Over Trp-439–Gly-452 the chain is Cytoplasmic.

The precursor is cleaved by a furin endopeptidase. Detected in testis and barely expressed in heart and muscle. Not detectable in liver.

The protein resides in the presynaptic cell membrane. It localises to the perikaryon. It is found in the cell projection. The protein localises to the axon. Its function is as follows. Probable ligand for integrin in the brain. This is a non-catalytic metalloprotease-like protein. The chain is Disintegrin and metalloproteinase domain-containing protein 11 (adam11) from Xenopus laevis (African clawed frog).